Here is a 366-residue protein sequence, read N- to C-terminus: tRNA 2-selenouridine synthase (366 aa).

The 125-residue stretch at 12–136 (FLSGTPMMDV…MRGFLIDVIE (125 aa)) folds into the Rhodanese domain. The active-site S-selanylcysteine intermediate is cysteine 95.

The protein belongs to the SelU family. Monomer.

It carries out the reaction 5-methylaminomethyl-2-thiouridine(34) in tRNA + selenophosphate + (2E)-geranyl diphosphate + H2O + H(+) = 5-methylaminomethyl-2-selenouridine(34) in tRNA + (2E)-thiogeraniol + phosphate + diphosphate. It catalyses the reaction 5-methylaminomethyl-2-thiouridine(34) in tRNA + (2E)-geranyl diphosphate = 5-methylaminomethyl-S-(2E)-geranyl-thiouridine(34) in tRNA + diphosphate. The catalysed reaction is 5-methylaminomethyl-S-(2E)-geranyl-thiouridine(34) in tRNA + selenophosphate + H(+) = 5-methylaminomethyl-2-(Se-phospho)selenouridine(34) in tRNA + (2E)-thiogeraniol. The enzyme catalyses 5-methylaminomethyl-2-(Se-phospho)selenouridine(34) in tRNA + H2O = 5-methylaminomethyl-2-selenouridine(34) in tRNA + phosphate. Involved in the post-transcriptional modification of the uridine at the wobble position (U34) of tRNA(Lys), tRNA(Glu) and tRNA(Gln). Catalyzes the conversion of 2-thiouridine (S2U-RNA) to 2-selenouridine (Se2U-RNA). Acts in a two-step process involving geranylation of 2-thiouridine (S2U) to S-geranyl-2-thiouridine (geS2U) and subsequent selenation of the latter derivative to 2-selenouridine (Se2U) in the tRNA chain. The protein is tRNA 2-selenouridine synthase of Cupriavidus pinatubonensis (strain JMP 134 / LMG 1197) (Cupriavidus necator (strain JMP 134)).